The following is a 342-amino-acid chain: Outer spore wall protein RRT8 (342 aa).

Over 1-109 (MKAGIELISH…VLTNPVYWKH (109 aa)) the chain is Cytoplasmic. Residues 110 to 130 (ILLFAVCYALIFVTIAGLFYV) form a helical membrane-spanning segment. Residue Thr131 is a topological domain, extracellular. The helical transmembrane segment at 132-152 (LVPLLVTWAILLLGPLGVILV) threads the bilayer. The Cytoplasmic portion of the chain corresponds to 153-240 (HIQWILQTNV…PRLLFRMFFK (88 aa)). A helical membrane pass occupies residues 241 to 261 (VSNFTSLTLLSLIPIVGPILA). The Extracellular portion of the chain corresponds to 262–299 (NQLMAPKRTFTYLQRYFLLKGFSKKQAKDFQYEHYASF). A helical transmembrane segment spans residues 300 to 320 (ICFGMSAGLLELIPFFTIVTI). Residues 321-342 (SSNTVGAAKWCTSLLKGERKKE) lie on the Cytoplasmic side of the membrane.

The protein belongs to the LDS family.

It is found in the prospore membrane. The protein resides in the lipid droplet. It localises to the spore wall. In terms of biological role, involved in spore wall assembly. May be involved in the modulation of rDNA transcription. The protein is Outer spore wall protein RRT8 of Saccharomyces cerevisiae (strain ATCC 204508 / S288c) (Baker's yeast).